We begin with the raw amino-acid sequence, 403 residues long: Argininosuccinate synthase (403 aa).

Residues 12-20 and Ala-39 each bind ATP; that span reads AYSGGLDTS. Tyr-90 and Ser-95 together coordinate L-citrulline. An ATP-binding site is contributed by Gly-120. L-aspartate-binding residues include Thr-122, Asn-126, and Asp-127. Residue Asn-126 participates in L-citrulline binding. L-citrulline is bound by residues Arg-130, Ser-182, Ser-191, Glu-267, and Tyr-279.

This sequence belongs to the argininosuccinate synthase family. Type 1 subfamily. As to quaternary structure, homotetramer.

Its subcellular location is the cytoplasm. The catalysed reaction is L-citrulline + L-aspartate + ATP = 2-(N(omega)-L-arginino)succinate + AMP + diphosphate + H(+). Its pathway is amino-acid biosynthesis; L-arginine biosynthesis; L-arginine from L-ornithine and carbamoyl phosphate: step 2/3. This is Argininosuccinate synthase from Ruthia magnifica subsp. Calyptogena magnifica.